The sequence spans 220 residues: Translation initiation factor IF-3 (220 aa).

The interval 182–220 (TPLVKKDDKEEPATRAVRTITAPPRPTSARLASKPAGNG) is disordered. Over residues 185–194 (VKKDDKEEPA) the composition is skewed to basic and acidic residues.

Belongs to the IF-3 family. Monomer.

It localises to the cytoplasm. Its function is as follows. IF-3 binds to the 30S ribosomal subunit and shifts the equilibrium between 70S ribosomes and their 50S and 30S subunits in favor of the free subunits, thus enhancing the availability of 30S subunits on which protein synthesis initiation begins. The polypeptide is Translation initiation factor IF-3 (Synechococcus sp. (strain WH7803)).